A 193-amino-acid polypeptide reads, in one-letter code: Ion-translocating oxidoreductase complex subunit B (193 aa).

The interval 1 to 23 (MTFLFIVITLLALIFGAILGFAS) is hydrophobic. One can recognise a 4Fe-4S domain in the interval 29–87 (EADPVVEKIDAILPQSQCGQCGYPGCKPYAEAICNGDEITKCIPGGQTTIVKIAEILGV). [4Fe-4S] cluster-binding residues include Cys46, Cys49, Cys54, Cys70, Cys110, Cys113, Cys116, Cys120, Cys140, Cys143, Cys146, and Cys150. 2 consecutive 4Fe-4S ferredoxin-type domains span residues 101–130 (KVAF…GTNK) and 131–160 (AMHT…MIPV).

The protein belongs to the 4Fe4S bacterial-type ferredoxin family. RnfB subfamily. As to quaternary structure, the complex is composed of six subunits: RnfA, RnfB, RnfC, RnfD, RnfE and RnfG. [4Fe-4S] cluster is required as a cofactor.

The protein localises to the cell inner membrane. Functionally, part of a membrane-bound complex that couples electron transfer with translocation of ions across the membrane. This is Ion-translocating oxidoreductase complex subunit B from Haemophilus influenzae (strain 86-028NP).